The following is a 509-amino-acid chain: Cytochrome P450 monooxygenase ORF9 (509 aa).

The next 2 membrane-spanning stretches (helical) occupy residues 20–40 (IYVL…GLIV) and 309–329 (LIIA…YYLL). A glycan (N-linked (GlcNAc...) asparagine) is linked at Asn353. Cys448 is a heme binding site.

This sequence belongs to the cytochrome P450 family. It depends on heme as a cofactor.

It is found in the membrane. Its pathway is sesquiterpene biosynthesis. Functionally, cytochrome P450 monooxygenase; part of the gene cluster that mediates the biosynthesis of PR-toxin, a bicyclic sesquiterpene belonging to the eremophilane class and acting as a mycotoxin. The first step of the pathway is catalyzed by the aristolochene synthase which performs the cyclization of trans,trans-farnesyl diphosphate (FPP) to the bicyclic sesquiterpene aristolochene. Following the formation of aristolochene, the non-oxygenated aristolochene is converted to the trioxygenated intermediate eremofortin B, via 7-epi-neopetasone. This conversion appears to involve three enzymes, a hydroxysterol oxidase-like enzyme, the quinone-oxidase prx3 that forms the quinone-type-structure in the bicyclic nucleus of aristolochene with the C8-oxo group and the C-3 hydroxyl group, and the P450 monooxygenase ORF6 that introduces the epoxide at the double bond between carbons 1 and 2. No monoxy or dioxy-intermediates have been reported to be released to the broth, so these three early oxidative reactions may be coupled together. Eremofortin B is further oxidized by another P450 monooxygenase, that introduces a second epoxide between carbons 7 and 11 prior to acetylation to eremofortin A by the acetyltransferase ORF8. The second epoxidation may be performed by a second P450 monooxygenase. After the acetylation step, eremofortin A is converted to eremofortin C and then to PR-toxin. First the conversion of eremofortin A to eremofortin C proceeds by oxidation of the side chain of the molecule at C-12 and is catalyzed by the short-chain oxidoreductase prx1. The cytochrome P450 monooxygenase ORF6 is probably also involved in this step. The primary alcohol formed at C-12 is finally oxidized by the short-chain alcohol dehydrogenase prx4 that forms PR-toxin. In Penicillium roqueforti (strain FM164), this protein is Cytochrome P450 monooxygenase ORF9.